Reading from the N-terminus, the 2623-residue chain is Immunoglobulin superfamily member 10 (2623 aa).

Residues 1 to 28 (MKVKGRGITCLLVSFAVICLVATPGGKA) form the signal peptide. Positions 29-56 (CPRRCACYMPTEVHCTFRYLTSIPDSIP) constitute an LRRNT domain. LRR repeat units follow at residues 58-79 (NVER…DFSG), 82-103 (KLEL…TFSD), 106-127 (ALQV…TFYG), 130-151 (SLTR…VFYG), 154-175 (FLRL…TFVS), and 186-207 (FIKF…MVSY). One can recognise an LRRCT domain in the interval 219–281 (NPWTCDCHLK…VSAAAFQCAK (63 aa)). N-linked (GlcNAc...) asparagine glycans are attached at residues N319 and N439. Ig-like C2-type domains lie at 461–567 (PRAE…YRIT) and 571–661 (PLVE…FQVS). Disulfide bonds link C497–C551 and C595–C645. N627 is a glycosylation site (N-linked (GlcNAc...) asparagine). Disordered stretches follow at residues 668 to 692 (RPLE…HLKE) and 767 to 788 (AMPD…QLPN). 2 N-linked (GlcNAc...) asparagine glycosylation sites follow: N774 and N999. 2 disordered regions span residues 1334 to 1376 (TQTE…AMTP) and 1434 to 1453 (STIA…TTTR). Residues 1335–1356 (QTERSRAQTIQREQEPQKKNRT) are compositionally biased toward basic and acidic residues. Residues 1357–1373 (DPNISPDQSSGFTTPTA) show a composition bias toward polar residues. Ig-like C2-type domains lie at 1648–1739 (PRIV…VTLS), 1745–1836 (PRIL…VKIQ), 1841–1933 (PPVI…VMLT), 1941–2034 (PRIE…VSLR), 2037–2135 (PAKI…VHLT), 2141–2229 (PRIR…YKLD), 2234–2331 (PPLI…LEVL), 2337–2427 (PTFR…VILE), 2432–2518 (PVIL…TLIT), and 2528–2623 (PRIT…IQVI). 3 disulfides stabilise this stretch: C1670-C1723, C1767-C1820, and C1864-C1917. N-linked (GlcNAc...) asparagine glycans are attached at residues N1899 and N1962. 7 disulfide bridges follow: C1963–C2016, C2060–C2119, C2163–C2213, C2261–C2313, C2359–C2411, C2454–C2506, and C2550–C2605. Residue N2101 is glycosylated (N-linked (GlcNAc...) asparagine). Residue Y2603 is modified to Phosphotyrosine.

It is found in the secreted. Its function is as follows. Involved in the control of early migration of neurons expressing gonadotropin-releasing hormone (GNRH neurons). May be involved in the maintenance of osteochondroprogenitor cells pool. This is Immunoglobulin superfamily member 10 (IGSF10) from Homo sapiens (Human).